We begin with the raw amino-acid sequence, 316 residues long: Probable cell division protein WhiA (316 aa).

Positions 280 to 313 (SLKELGEMLEPPVGKSGVNHRLRKIEKIAEELRT) form a DNA-binding region, H-T-H motif.

It belongs to the WhiA family.

Its function is as follows. Involved in cell division and chromosome segregation. The polypeptide is Probable cell division protein WhiA (Clostridium perfringens (strain 13 / Type A)).